The sequence spans 266 residues: Ribosomal RNA small subunit methyltransferase A (266 aa).

6 residues coordinate S-adenosyl-L-methionine: Asn12, Leu14, Gly39, Glu61, Asp87, and Asn107.

This sequence belongs to the class I-like SAM-binding methyltransferase superfamily. rRNA adenine N(6)-methyltransferase family. RsmA subfamily.

The protein localises to the cytoplasm. The enzyme catalyses adenosine(1518)/adenosine(1519) in 16S rRNA + 4 S-adenosyl-L-methionine = N(6)-dimethyladenosine(1518)/N(6)-dimethyladenosine(1519) in 16S rRNA + 4 S-adenosyl-L-homocysteine + 4 H(+). Functionally, specifically dimethylates two adjacent adenosines (A1518 and A1519) in the loop of a conserved hairpin near the 3'-end of 16S rRNA in the 30S particle. May play a critical role in biogenesis of 30S subunits. This Nitratidesulfovibrio vulgaris (strain ATCC 29579 / DSM 644 / CCUG 34227 / NCIMB 8303 / VKM B-1760 / Hildenborough) (Desulfovibrio vulgaris) protein is Ribosomal RNA small subunit methyltransferase A.